The following is a 429-amino-acid chain: Threonine synthase (429 aa).

The residue at position 107 (K107) is an N6-(pyridoxal phosphate)lysine.

This sequence belongs to the threonine synthase family. Requires pyridoxal 5'-phosphate as cofactor.

It catalyses the reaction O-phospho-L-homoserine + H2O = L-threonine + phosphate. Its pathway is amino-acid biosynthesis; L-threonine biosynthesis; L-threonine from L-aspartate: step 5/5. Its function is as follows. Catalyzes the gamma-elimination of phosphate from L-phosphohomoserine and the beta-addition of water to produce L-threonine. The chain is Threonine synthase (thrC) from Serratia marcescens.